A 158-amino-acid polypeptide reads, in one-letter code: Regulator of sigma D (158 aa).

Belongs to the Rsd/AlgQ family. In terms of assembly, interacts with RpoD.

Its subcellular location is the cytoplasm. Binds RpoD and negatively regulates RpoD-mediated transcription activation by preventing the interaction between the primary sigma factor RpoD with the catalytic core of the RNA polymerase and with promoter DNA. May be involved in replacement of the RNA polymerase sigma subunit from RpoD to RpoS during the transition from exponential growth to the stationary phase. The protein is Regulator of sigma D of Shigella dysenteriae serotype 1 (strain Sd197).